A 319-amino-acid polypeptide reads, in one-letter code: MKLSRISAINWNKISDDKDLEVWNRLTSNFWLPEKVPLSNDIPAWQTLTVVEQQLTMRVFTGLTLLDTLQNVIGAPSLMPDALTPHEEAVLSNISFMEAVHARSYSSIFSTLCQTKDVDAAYAWSEENAPLQRKAQIIQQHYRGDDPLKKKIASVFLESFLFYSGFWLPMYFSSRGKLTNTADLIRLIIRDEAVHGYYIGYKYQKNMEKISLGQREELKSFAFDLLLELYDNELQYTDELYAETPWADDVKAFLCYNANKALMNLGYEPLFPAEMAEVNPAILAALSPNADENHDFFSGSGSSYVMGKAVETEDEDWNF.

Residues Asp67, Glu98, and His101 each coordinate Fe cation. Residue Tyr105 is part of the active site. The Fe cation site is built by Glu158, Glu192, and His195.

This sequence belongs to the ribonucleoside diphosphate reductase small chain family. As to quaternary structure, tetramer of two alpha and two beta subunits. The cofactor is Fe cation.

It catalyses the reaction a 2'-deoxyribonucleoside 5'-diphosphate + [thioredoxin]-disulfide + H2O = a ribonucleoside 5'-diphosphate + [thioredoxin]-dithiol. In terms of biological role, provides the precursors necessary for DNA synthesis. Catalyzes the biosynthesis of deoxyribonucleotides from the corresponding ribonucleotides. R2F contains the tyrosyl radical required for catalysis. The sequence is that of Ribonucleoside-diphosphate reductase 2 subunit beta (nrdF) from Escherichia coli (strain K12).